Consider the following 395-residue polypeptide: MMPNSRSATITPTTESTTTTTTTTTTLTTSYWCYSCTRFISVWEDQDANAGVLCPYCNGGFIEEIEDSSNSTVAAIPASTPEVRSVEETHRSIIRRRRSNRRTSFNPVIVLHGGGGGGAGERVENEEGDGATRERRAYEFYYDDGSGSGLRPLPDSVSEILMGSGFERLLEQLSQIEASGNGIGRSGNPPASKSAIESLPRVEISDCHTKAEANCAVCTEVFEAGIEGREMPCKHIFHGDCIVPWLSIRNSCPVCRFELPSDPIQRSNEEEHAVGMTIWRLPGGGFAVGRFNAGVREGERILPVVLTEMDGGGLGSNEGPRRISWVRAHETPEMSRNGGRSGNGGRLRRAVRGMVSFMRRVRPSRGSSNSNVIDLDSDGETRVMNRSTSLIRRFF.

Disordered regions lie at residues 1–22 (MMPN…TTTT) and 107–130 (PVIV…EGDG). Over residues 9–22 (TITPTTESTTTTTT) the composition is skewed to low complexity. Over residues 121-130 (ERVENEEGDG) the composition is skewed to basic and acidic residues. The RING-type; atypical zinc-finger motif lies at 215–256 (CAVCTEVFEAGIEGREMPCKHIFHGDCIVPWLSIRNSCPVCR).

Expressed in root tips, leaf tips, junction of carpels and pedicels, stigma, anthers, pollen, vasculature of sepals and petals, immature seeds and embryos.

Its subcellular location is the cytoplasm. The protein localises to the cytosol. It is found in the nucleus. It carries out the reaction S-ubiquitinyl-[E2 ubiquitin-conjugating enzyme]-L-cysteine + [acceptor protein]-L-lysine = [E2 ubiquitin-conjugating enzyme]-L-cysteine + N(6)-ubiquitinyl-[acceptor protein]-L-lysine.. Its pathway is protein modification; protein ubiquitination. E3 ubiquitin-protein ligase involved in the positive regulation of abscisic acid-dependent drought stress responses. Involved in the positive regulation of responses to salt and osmotic stresses during seed germination and early seedling development. Possesses E3 ubiquitin ligase activity in vitro. The chain is E3 ubiquitin-protein ligase RDUF1 from Arabidopsis thaliana (Mouse-ear cress).